A 709-amino-acid chain; its full sequence is MAAAVAAAAAAAAAAASFQVLEMESMETAVAGSASLAAEVRGSGTVDFVTGAGISTLVDTGGSDPGPEAEDFECSTHCSELSWRQNEQRRQGLFCDITLCFGGAGGREFRAHRSVLAAATEYFTPLLSGQFSESRSGRVEMRKWSSEPGPEPDTVEAVIEYMYTGRIRVSTGSVHEVLELADRFLLIRLKEFCGEFLKKKLHLSNCVAIHSLAHMYTLSQLALKAADMIRRNFYKVIQDEEFYTLPFHLIRDWLSDLEITVDSEEVLFETVLKWVQRNAEERERYFEELFKLLRLSQMKPTYLTRHVKPERLVANNEVCVKLVAEAVERHALRAENIQSGTLQQPTSQVSLLPRYGQNMDVIMVIGGVSEGGDYLSECVGYFVDEDRWVNLPHIHNHLDGHAVAITESYVYVAGSMEPGFAKTVERYNPNLNTWEHVCSLMTRKHSFGLTEVKGKLYSIGGHGNFSPGFKDVTVYNPELDKWHNLESAPKILRDVKALAIEDRFVYIAARTPVDRDTEDGLKAVITCYDTETRQWQDVESLPLIDNYCFFQMSVVNSNFYQTASCCPKSYSLENEEAVRKIAGQVSDEILESLPPEVLSIEGAAICYYRDDVFIIGGWKNSDDIDKQYRKEAYRYCAERKRWMLLPPMPQPRCRATACHVRIPYRYLHGTQRYPMPQNLMWQKDRIRQMQEIHRHALNMRRVPSSQIEC.

A signal peptide spans Met1–Ala15. The BTB domain occupies Cys95 to Thr171. In terms of domain architecture, BACK spans Cys206 to Lys308. 5 Kelch repeats span residues Val361–Ser408, Tyr409–Gly454, Leu456–Asp502, Phe504–Ser557, and Asp611–Ile662. A Phosphoserine modification is found at Ser466.

In terms of assembly, homodimer. Interacts with CUL3. Component of a cullin-RING-based BCR (BTB-CUL3-RBX1) E3 ubiquitin-protein ligase complex.

Component of a cullin-RING-based BCR (BTB-CUL3-RBX1) E3 ubiquitin-protein ligase complex that mediates the ubiquitination of target proteins, leading most often to their proteasomal degradation. This Mus musculus (Mouse) protein is Kelch-like protein 11 (Klhl11).